Consider the following 623-residue polypeptide: Glucokinase regulatory protein (623 aa).

SIS domains follow at residues 90-286 and 320-476; these read VQEV…QGVV and VGIS…VQKF. Residues 109 to 110, Glu-153, and 179 to 181 each bind beta-D-fructose 1-phosphate; these read TS and SVG. 109-110 serves as a coordination point for beta-D-fructose 6-phosphate; the sequence is TS. A beta-D-fructose 6-phosphate-binding site is contributed by 179–181; that stretch reads SVG. Positions 199-200 are important for interaction with GCK; it reads AV. Glu-348 is a beta-D-fructose 1-phosphate binding site. The tract at residues 463-465 is essential for interaction with GCK; that stretch reads LLF.

It belongs to the GCKR family. As to quaternary structure, interacts (fructose 6-phosphate bound form) with GCK.

The protein localises to the cytoplasm. Its subcellular location is the nucleus. The protein resides in the mitochondrion. Its function is as follows. Regulates glucokinase (GCK) by forming an inactive complex with this enzyme. Acts by promoting GCK recruitment to the nucleus, possibly to provide a reserve of GCK that can be quickly released in the cytoplasm after a meal. The affinity of GCKR for GCK is modulated by fructose metabolites: GCKR with bound fructose 6-phosphate has increased affinity for GCK, while GCKR with bound fructose 1-phosphate has strongly decreased affinity for GCK and does not inhibit GCK activity. The protein is Glucokinase regulatory protein of Mus musculus (Mouse).